Consider the following 407-residue polypeptide: Carbamoyl phosphate synthase small chain (407 aa).

The CPSase stretch occupies residues 1–203 (MSQNESGTIA…EPCGEYEGKE (203 aa)). L-glutamine-binding residues include Ser61, Gly255, and Gly257. The 199-residue stretch at 207 to 405 (TVAAVDLGIK…CELMKNNSKE (199 aa)) folds into the Glutamine amidotransferase type-1 domain. Cys283 acts as the Nucleophile in catalysis. Positions 284, 287, 325, 327, and 328 each coordinate L-glutamine. Active-site residues include His378 and Glu380.

This sequence belongs to the CarA family. As to quaternary structure, composed of two chains; the small (or glutamine) chain promotes the hydrolysis of glutamine to ammonia, which is used by the large (or ammonia) chain to synthesize carbamoyl phosphate. Tetramer of heterodimers (alpha,beta)4.

The enzyme catalyses hydrogencarbonate + L-glutamine + 2 ATP + H2O = carbamoyl phosphate + L-glutamate + 2 ADP + phosphate + 2 H(+). The catalysed reaction is L-glutamine + H2O = L-glutamate + NH4(+). Its pathway is amino-acid biosynthesis; L-arginine biosynthesis; carbamoyl phosphate from bicarbonate: step 1/1. The protein operates within pyrimidine metabolism; UMP biosynthesis via de novo pathway; (S)-dihydroorotate from bicarbonate: step 1/3. Its function is as follows. Small subunit of the glutamine-dependent carbamoyl phosphate synthetase (CPSase). CPSase catalyzes the formation of carbamoyl phosphate from the ammonia moiety of glutamine, carbonate, and phosphate donated by ATP, constituting the first step of 2 biosynthetic pathways, one leading to arginine and/or urea and the other to pyrimidine nucleotides. The small subunit (glutamine amidotransferase) binds and cleaves glutamine to supply the large subunit with the substrate ammonia. This Bifidobacterium longum (strain DJO10A) protein is Carbamoyl phosphate synthase small chain.